Here is a 339-residue protein sequence, read N- to C-terminus: Anthranilate phosphoribosyltransferase (339 aa).

5-phospho-alpha-D-ribose 1-diphosphate contacts are provided by residues Gly81, 84-85, Ser89, 91-94, 109-117, and Ala121; these read GD, NVSS, and KHGNRALSS. An anthranilate-binding site is contributed by Gly81. Ser93 lines the Mg(2+) pocket. Anthranilate is bound at residue Asn112. Arg167 is a binding site for anthranilate. Mg(2+) is bound by residues Asp225 and Glu226.

The protein belongs to the anthranilate phosphoribosyltransferase family. Homodimer. The cofactor is Mg(2+).

It carries out the reaction N-(5-phospho-beta-D-ribosyl)anthranilate + diphosphate = 5-phospho-alpha-D-ribose 1-diphosphate + anthranilate. It participates in amino-acid biosynthesis; L-tryptophan biosynthesis; L-tryptophan from chorismate: step 2/5. Its function is as follows. Catalyzes the transfer of the phosphoribosyl group of 5-phosphorylribose-1-pyrophosphate (PRPP) to anthranilate to yield N-(5'-phosphoribosyl)-anthranilate (PRA). The polypeptide is Anthranilate phosphoribosyltransferase (Brucella ovis (strain ATCC 25840 / 63/290 / NCTC 10512)).